Consider the following 214-residue polypeptide: Ribonuclease HII (214 aa).

The RNase H type-2 domain maps to 27–214 (SVVAGIDEAG…SPIKQMCAIV (188 aa)). D33, E34, and D126 together coordinate a divalent metal cation.

It belongs to the RNase HII family. Mn(2+) is required as a cofactor. The cofactor is Mg(2+).

It localises to the cytoplasm. The enzyme catalyses Endonucleolytic cleavage to 5'-phosphomonoester.. Its function is as follows. Endonuclease that specifically degrades the RNA of RNA-DNA hybrids. This is Ribonuclease HII (rnhB) from Chlamydia pneumoniae (Chlamydophila pneumoniae).